A 436-amino-acid chain; its full sequence is MTQLQSLRGMVDLLPEQTRCWQAVESVARDHFRRAGLQEIRTPLLEVTELFARGIGEATDVVGKEMYTFVDRGDRSCTLRPEGTASVVRAALQHGLLSQGPQRFWYGGPMFRYERPQAGRQRQFYQIGVEYLGVGSPRSDAEVIALAWALLVDLGVQGLVLEINSLGTLQDRQKYREELVAWLEARSEELDDDSRKRLYTNPLRILDSKHPAIKELLQDAPTLFEALSVESKARFEEVQVDLEALQIPFQLNPRLVRGLDYYGHTAFEITSDQLGAQATVCGGGRYDGLVEQLGGAPTPAFGWAFGMERLMLLLEAAASINPSGSAARLRASTRPDLYVVNRGEQAERVALVIAHQLRAAGLVVELDSSGAAFNKQFKRAGRSRATWALVIGDDEAERGEGRLKYLQEAKTQANPTPIDKLHRLDDVTGLVCLVRE.

The protein belongs to the class-II aminoacyl-tRNA synthetase family. As to quaternary structure, homodimer.

The protein localises to the cytoplasm. It catalyses the reaction tRNA(His) + L-histidine + ATP = L-histidyl-tRNA(His) + AMP + diphosphate + H(+). The sequence is that of Histidine--tRNA ligase from Prochlorococcus marinus (strain MIT 9313).